We begin with the raw amino-acid sequence, 352 residues long: Protein RecA (352 aa).

Position 65–72 (G65–T72) interacts with ATP. A disordered region spans residues V333 to I352. A compositionally biased stretch (acidic residues) spans E343–I352.

It belongs to the RecA family.

The protein localises to the cytoplasm. In terms of biological role, can catalyze the hydrolysis of ATP in the presence of single-stranded DNA, the ATP-dependent uptake of single-stranded DNA by duplex DNA, and the ATP-dependent hybridization of homologous single-stranded DNAs. It interacts with LexA causing its activation and leading to its autocatalytic cleavage. This chain is Protein RecA, found in Pseudomonas fluorescens.